Consider the following 138-residue polypeptide: Acidic phospholipase A2 DsM-a2/DsM-a2' (138 aa).

The first 16 residues, 1-16 (MRTLWIVAVCLIGVEG), serve as a signal peptide directing secretion. Disulfide bonds link cysteine 42-cysteine 131, cysteine 44-cysteine 60, cysteine 59-cysteine 111, cysteine 65-cysteine 138, cysteine 66-cysteine 104, cysteine 73-cysteine 97, and cysteine 91-cysteine 102. 3 residues coordinate Ca(2+): tyrosine 43, glycine 45, and glycine 47. Residue histidine 63 is part of the active site. Residue aspartate 64 coordinates Ca(2+). The active site involves aspartate 105.

This sequence belongs to the phospholipase A2 family. Group II subfamily. D49 sub-subfamily. Ca(2+) serves as cofactor. In terms of tissue distribution, expressed by the venom gland.

The protein localises to the secreted. It catalyses the reaction a 1,2-diacyl-sn-glycero-3-phosphocholine + H2O = a 1-acyl-sn-glycero-3-phosphocholine + a fatty acid + H(+). Its function is as follows. Exhibits high hydrolytic activities and shows strong preference for the anionic micelles (dPPC with deoxycholate) to the zwitterionic micelles (dPPC with Triton X-100). PLA2 catalyzes the calcium-dependent hydrolysis of the 2-acyl groups in 3-sn-phosphoglycerides. In Daboia siamensis (Eastern Russel's viper), this protein is Acidic phospholipase A2 DsM-a2/DsM-a2'.